A 393-amino-acid polypeptide reads, in one-letter code: Riboflavin biosynthesis protein RibBA (393 aa).

Positions 1-200 (MQFDTIELAI…IKSLVAFRKA (200 aa)) are DHBP synthase. D-ribulose 5-phosphate-binding positions include 27 to 28 (RE), aspartate 32, 139 to 143 (RNGHT), and glutamate 163. Position 28 (glutamate 28) interacts with Mg(2+). Residue histidine 142 coordinates Mg(2+). The GTP cyclohydrolase II stretch occupies residues 201-393 (VELNVNLKAK…TKKNKMGHLI (193 aa)). 249–253 (RMHSA) serves as a coordination point for GTP. 3 residues coordinate Zn(2+): cysteine 254, cysteine 265, and cysteine 267. Residues glutamine 270, 291 to 293 (EGR), and threonine 313 contribute to the GTP site. Aspartate 325 functions as the Proton acceptor; for GTP cyclohydrolase activity in the catalytic mechanism. Arginine 327 serves as the catalytic Nucleophile; for GTP cyclohydrolase activity. Residues serine 348 and lysine 353 each contribute to the GTP site.

It in the N-terminal section; belongs to the DHBP synthase family. This sequence in the C-terminal section; belongs to the GTP cyclohydrolase II family. The cofactor is Mg(2+). It depends on Mn(2+) as a cofactor. Zn(2+) is required as a cofactor.

The catalysed reaction is D-ribulose 5-phosphate = (2S)-2-hydroxy-3-oxobutyl phosphate + formate + H(+). It carries out the reaction GTP + 4 H2O = 2,5-diamino-6-hydroxy-4-(5-phosphoribosylamino)-pyrimidine + formate + 2 phosphate + 3 H(+). It functions in the pathway cofactor biosynthesis; riboflavin biosynthesis; 2-hydroxy-3-oxobutyl phosphate from D-ribulose 5-phosphate: step 1/1. The protein operates within cofactor biosynthesis; riboflavin biosynthesis; 5-amino-6-(D-ribitylamino)uracil from GTP: step 1/4. Functionally, catalyzes the conversion of D-ribulose 5-phosphate to formate and 3,4-dihydroxy-2-butanone 4-phosphate. In terms of biological role, catalyzes the conversion of GTP to 2,5-diamino-6-ribosylamino-4(3H)-pyrimidinone 5'-phosphate (DARP), formate and pyrophosphate. The sequence is that of Riboflavin biosynthesis protein RibBA from Staphylococcus epidermidis (strain ATCC 12228 / FDA PCI 1200).